The sequence spans 132 residues: Small ribosomal subunit protein uS8 (132 aa).

The protein belongs to the universal ribosomal protein uS8 family. Part of the 30S ribosomal subunit. Contacts proteins S5 and S12.

Functionally, one of the primary rRNA binding proteins, it binds directly to 16S rRNA central domain where it helps coordinate assembly of the platform of the 30S subunit. This chain is Small ribosomal subunit protein uS8, found in Streptococcus suis (strain 98HAH33).